Reading from the N-terminus, the 210-residue chain is Imidazoleglycerol-phosphate dehydratase (210 aa).

Belongs to the imidazoleglycerol-phosphate dehydratase family.

It is found in the cytoplasm. The enzyme catalyses D-erythro-1-(imidazol-4-yl)glycerol 3-phosphate = 3-(imidazol-4-yl)-2-oxopropyl phosphate + H2O. Its pathway is amino-acid biosynthesis; L-histidine biosynthesis; L-histidine from 5-phospho-alpha-D-ribose 1-diphosphate: step 6/9. The protein is Imidazoleglycerol-phosphate dehydratase of Mycobacterium leprae (strain Br4923).